The following is an 85-amino-acid chain: MAHPRTPQQRLAVALIRVYQWVISPLLGPRCRFTPTCSQYMINAICLHGLIKGIWLGGKRLLKCHPLHSGGHDPVPQPQQSKRRK.

The protein belongs to the UPF0161 family.

It localises to the cell inner membrane. In terms of biological role, could be involved in insertion of integral membrane proteins into the membrane. The protein is Putative membrane protein insertion efficiency factor of Tolumonas auensis (strain DSM 9187 / NBRC 110442 / TA 4).